Consider the following 195-residue polypeptide: Protein GrpE (195 aa).

The protein belongs to the GrpE family. In terms of assembly, homodimer.

It localises to the cytoplasm. In terms of biological role, participates actively in the response to hyperosmotic and heat shock by preventing the aggregation of stress-denatured proteins, in association with DnaK and GrpE. It is the nucleotide exchange factor for DnaK and may function as a thermosensor. Unfolded proteins bind initially to DnaJ; upon interaction with the DnaJ-bound protein, DnaK hydrolyzes its bound ATP, resulting in the formation of a stable complex. GrpE releases ADP from DnaK; ATP binding to DnaK triggers the release of the substrate protein, thus completing the reaction cycle. Several rounds of ATP-dependent interactions between DnaJ, DnaK and GrpE are required for fully efficient folding. This chain is Protein GrpE, found in Francisella tularensis subsp. holarctica (strain OSU18).